A 146-amino-acid chain; its full sequence is Cyanate hydratase (146 aa).

Active-site residues include R87, E90, and S113.

The protein belongs to the cyanase family.

The catalysed reaction is cyanate + hydrogencarbonate + 3 H(+) = NH4(+) + 2 CO2. Functionally, catalyzes the reaction of cyanate with bicarbonate to produce ammonia and carbon dioxide. The sequence is that of Cyanate hydratase from Pseudomonas putida (strain ATCC 700007 / DSM 6899 / JCM 31910 / BCRC 17059 / LMG 24140 / F1).